The chain runs to 606 residues: MACPF domain-containing protein At4g24290 (606 aa).

Positions 1–332 constitute an MACPF domain; that stretch reads MALRLPASKA…PPIEELHQFL (332 aa).

This sequence belongs to the complement C6/C7/C8/C9 (TC 1.C.39) family.

In terms of biological role, negatively controls the salicylic acid (SA)-mediated pathway of programmed cell death in plant immunity. This Arabidopsis thaliana (Mouse-ear cress) protein is MACPF domain-containing protein At4g24290.